The following is a 749-amino-acid chain: Replication restart protein PriA (749 aa).

Residues 224-391 (SLKTSQFHTH…LSGKYVLSRL (168 aa)) form the Helicase ATP-binding domain. Position 237–244 (237–244 (GITGSGKT)) interacts with ATP. Positions 333–336 (DEEH) match the DEAH box motif. 8 residues coordinate Zn(2+): cysteine 454, cysteine 457, cysteine 463, cysteine 466, cysteine 481, cysteine 484, cysteine 495, and cysteine 498. The 169-residue stretch at 490–658 (DLPQSCPKCL…EYPPFIRLIR (169 aa)) folds into the Helicase C-terminal domain.

The protein belongs to the helicase family. PriA subfamily. In terms of assembly, component of the replication restart primosome. The cofactor is Zn(2+).

The catalysed reaction is Couples ATP hydrolysis with the unwinding of duplex DNA by translocating in the 3'-5' direction.. The enzyme catalyses ATP + H2O = ADP + phosphate + H(+). Initiates the restart of stalled replication forks, which reloads the replicative helicase on sites other than the origin of replication. Recognizes and binds to abandoned replication forks and remodels them to uncover a helicase loading site. Promotes assembly of the primosome at these replication forks. The chain is Replication restart protein PriA from Chlamydia pneumoniae (Chlamydophila pneumoniae).